We begin with the raw amino-acid sequence, 514 residues long: Cytochrome P450 monooxygenase FUS8 (514 aa).

Residues 24 to 44 (VFENLTVTNTVCAFIALFIIV) form a helical membrane-spanning segment. Asn-225 and Asn-443 each carry an N-linked (GlcNAc...) asparagine glycan. Cys-460 contributes to the heme binding site.

The protein belongs to the cytochrome P450 family. The cofactor is heme.

It is found in the membrane. The protein operates within mycotoxin biosynthesis. Its function is as follows. Cytochrome P450 monooxygenase; part of the gene cluster that mediates the biosynthesis of the mycotoxin fusarin C. Within the cluster, FUS1, FUS2, FUS8 and FUS9 are sufficient for fusarin production. The roles of the other FUS members are yet undetermined. The fusarin C synthetase FUS1 is responsible for the condensation of one acetyl-coenzyme A (CoA) unit with six malonyl-CoA units and the amide linkage of the arising heptaketide and homoserine, subsequently releasing the first intermediate, prefusarin, as an alcohol with an open ring structure. The cytochrome P450 monooxygenase FUS8 participates in multiple oxidation processes at carbon C-20 and is able to use the FUS1 product as substrate, resulting in formation of 20-hydroxy-prefusarin. This reaction seems to be essential before the 2-pyrrolidone ring closure can be catalyzed by FUS2, generating 20-hydroxy-fusarin. FUS8 is able to further oxidizes carbon C-20 after ring closure, resulting in the formation of carboxy-fusarin C. As the last step, FUS9 methylates the hydroxyl group at C-21 to generate fusarin C. Fusarin C can then rearrange to epi-fusarin C, the (z)-isomers, and fusarin A and fusarin D. This is Cytochrome P450 monooxygenase FUS8 from Gibberella fujikuroi (strain CBS 195.34 / IMI 58289 / NRRL A-6831) (Bakanae and foot rot disease fungus).